The primary structure comprises 308 residues: Vacuolar lysine transporter YPQ1 (308 aa).

At 1-12 (MQLVPLELNRST) the chain is on the vacuolar side. Asparagine 9 carries an N-linked (GlcNAc...) asparagine glycan. The region spanning 10–76 (RSTLSGISGS…QHLLSTMIIL (67 aa)) is the PQ-loop 1 domain. The helical transmembrane segment at 13–33 (LSGISGSISISCWIIVFVPQI) threads the bilayer. Topologically, residues 34–44 (YENFYRKSSDG) are cytoplasmic. Residues 45–65 (LSLLFVVLWLAGDVFNLMGAV) form a helical membrane-spanning segment. The Vacuolar segment spans residues 66-68 (MQH). The helical transmembrane segment at 69 to 89 (LLSTMIILAAYYTVADIILLG) threads the bilayer. The Cytoplasmic segment spans residues 90–167 (QCLWYDNEEK…EVNSRNLIKD (78 aa)). Residues 168 to 188 (IFIVSGVVFVGFISWYVTYCV) traverse the membrane as a helical segment. N-linked (GlcNAc...) asparagine glycosylation is present at asparagine 189. At 189–205 (NYTQPPPVEDPSLPVPE) the chain is on the vacuolar side. A helical membrane pass occupies residues 206-226 (LQINWMAQIFGYLSALLYLGS). The region spanning 211 to 274 (MAQIFGYLSA…ISLDWKYLIM (64 aa)) is the PQ-loop 2 domain. Over 227–244 (RIPQILLNFKRKSCEGIS) the chain is Cytoplasmic. Residues 245–265 (FLFFLFACLGNTTFIFSVIVI) form a helical membrane-spanning segment. Residues 266–277 (SLDWKYLIMNAS) are Vacuolar-facing. An N-linked (GlcNAc...) asparagine glycan is attached at asparagine 275. The chain crosses the membrane as a helical span at residues 278–298 (WLVGSIGTLFMDFVIFSQFFI). Residues 299-308 (YKRNKKFILN) lie on the Cytoplasmic side of the membrane.

The protein belongs to the laat-1 family.

It localises to the vacuole membrane. In terms of biological role, amino acid transporter that moves lysine into the vacuole. May also contribute to low affinity arginine import into the vacuole. Has also been suggested to mediate export of cationic amino acids from the vacuole. May function as an amino acid/proton antiporter. In Saccharomyces cerevisiae (strain ATCC 204508 / S288c) (Baker's yeast), this protein is Vacuolar lysine transporter YPQ1 (YPQ1).